The primary structure comprises 286 residues: Deaminated glutathione amidase (286 aa).

One can recognise a CN hydrolase domain in the interval 4–252 (ANVALLQLCS…VSALKVKIET (249 aa)). Catalysis depends on Glu-42, which acts as the Proton acceptor. Lys-115 is a catalytic residue. The Nucleophile role is filled by Cys-157.

The protein belongs to the carbon-nitrogen hydrolase superfamily. NIT1/NIT2 family.

The catalysed reaction is N-(4-oxoglutaryl)-L-cysteinylglycine + H2O = L-cysteinylglycine + 2-oxoglutarate. Hydrolyzes deaminated glutathione (dGSH, 2-oxoglutaramate) to alpha-ketoglutarate (alpha-KG) and cysteinylglycine (specific activity 6.50 umol/min/mg), has less activity against alpha-ketoglutaramate (a-KGM, specific activity 0.20 umol/min/mg), very little activity on glutathione and none on L-glutamine. May function as a metabolite repair enzyme. The chain is Deaminated glutathione amidase from Yersinia enterocolitica.